The following is a 632-amino-acid chain: Transcription factor asR4 (632 aa).

Residues 26–52 (CDSCNKSKTKCPGGNPCPLCQCSGIRC) constitute a DNA-binding region (zn(2)-C6 fungal-type). The span at 101–111 (HISSNPSPVGS) shows a compositional bias: polar residues. 3 disordered regions span residues 101–129 (HISSNPSPVGSQSQQQQHPQQAGQQQQQQ), 270–311 (SNEY…GDGH), and 324–356 (TSASSIVEQQSIPTSPVTVAPMSPAKSSSVPRT). A compositionally biased stretch (low complexity) spans 112-129 (QSQQQQHPQQAGQQQQQQ). 3 stretches are compositionally biased toward polar residues: residues 270–286 (SNEYSTSSNSKPSTTDD), 294–306 (PDSSTTHRPSSSV), and 329–340 (IVEQQSIPTSPV).

Its subcellular location is the nucleus. In terms of biological role, transcription factor; part of the gene cluster that mediates the biosynthesis of xenovulene A, an unusual meroterpenoid that has potent inhibitory effects on the human gamma-aminobutyrate A (GABAA) benzodiazepine receptor. This chain is Transcription factor asR4, found in Sarocladium schorii (Acremonium strictum (strain IMI 501407)).